Reading from the N-terminus, the 454-residue chain is UDP-N-acetylmuramate--L-alanine ligase (454 aa).

Position 113 to 119 (G113 to T119) interacts with ATP.

This sequence belongs to the MurCDEF family.

The protein localises to the cytoplasm. The enzyme catalyses UDP-N-acetyl-alpha-D-muramate + L-alanine + ATP = UDP-N-acetyl-alpha-D-muramoyl-L-alanine + ADP + phosphate + H(+). It functions in the pathway cell wall biogenesis; peptidoglycan biosynthesis. In terms of biological role, cell wall formation. This Aquifex aeolicus (strain VF5) protein is UDP-N-acetylmuramate--L-alanine ligase.